Consider the following 187-residue polypeptide: Holliday junction branch migration complex subunit RuvA (187 aa).

Residues 1–64 are domain I; it reads MIEYVRGIIE…EDGFQIFGFK (64 aa). Residues 65–136 form a domain II region; the sequence is TKEELDLFEK…ELKDKLPKEI (72 aa). Residues 136 to 139 form a flexible linker region; it reads IVFE. A domain III region spans residues 140 to 187; that stretch reads GDNNFSNEALEALLALGYTKSEAIYALADITCDSVEDAVKQALKKLMK.

It belongs to the RuvA family. As to quaternary structure, homotetramer. Forms an RuvA(8)-RuvB(12)-Holliday junction (HJ) complex. HJ DNA is sandwiched between 2 RuvA tetramers; dsDNA enters through RuvA and exits via RuvB. An RuvB hexamer assembles on each DNA strand where it exits the tetramer. Each RuvB hexamer is contacted by two RuvA subunits (via domain III) on 2 adjacent RuvB subunits; this complex drives branch migration. In the full resolvosome a probable DNA-RuvA(4)-RuvB(12)-RuvC(2) complex forms which resolves the HJ.

The protein resides in the cytoplasm. In terms of biological role, the RuvA-RuvB-RuvC complex processes Holliday junction (HJ) DNA during genetic recombination and DNA repair, while the RuvA-RuvB complex plays an important role in the rescue of blocked DNA replication forks via replication fork reversal (RFR). RuvA specifically binds to HJ cruciform DNA, conferring on it an open structure. The RuvB hexamer acts as an ATP-dependent pump, pulling dsDNA into and through the RuvAB complex. HJ branch migration allows RuvC to scan DNA until it finds its consensus sequence, where it cleaves and resolves the cruciform DNA. The protein is Holliday junction branch migration complex subunit RuvA of Thermoanaerobacter pseudethanolicus (strain ATCC 33223 / 39E) (Clostridium thermohydrosulfuricum).